Here is a 336-residue protein sequence, read N- to C-terminus: MSALKTHIAKVAAGTALSFEEAREAFDIIMSGDATPGQIGGFLMALRVRGETVSEISGAVATMRAKMLRVEAPAGAIDIVGTGGDNSHSVNISTGSAFVIAAAGVPVAKHGNRGLSSLTGAADVLIALGVKIDIPPDAIGRCIHEAGVGFMFAPAHHPAMKHVGPTRVELGTRTIFNLLGPLSNPAGVVRQMVGVFLPEWILPVAETLKALGTEHAWVVHGDGYDEITTTGETQVAELIGGEIRSFTLTPEEVGLKRHTKDELRGGDAAYNANALRDMLDGAAGAYRDTVLMNAGAGLVIAGKATTLGDGIALAAQAIDSGRALQVLDRLVEISNG.

Residues G81, G84–D85, S89, N91–T94, K109–S117, and A121 each bind 5-phospho-alpha-D-ribose 1-diphosphate. G81 is an anthranilate binding site. S93 lines the Mg(2+) pocket. Residue N112 coordinates anthranilate. R167 contributes to the anthranilate binding site. Positions 225 and 226 each coordinate Mg(2+).

This sequence belongs to the anthranilate phosphoribosyltransferase family. Homodimer. Requires Mg(2+) as cofactor.

It catalyses the reaction N-(5-phospho-beta-D-ribosyl)anthranilate + diphosphate = 5-phospho-alpha-D-ribose 1-diphosphate + anthranilate. It functions in the pathway amino-acid biosynthesis; L-tryptophan biosynthesis; L-tryptophan from chorismate: step 2/5. Functionally, catalyzes the transfer of the phosphoribosyl group of 5-phosphorylribose-1-pyrophosphate (PRPP) to anthranilate to yield N-(5'-phosphoribosyl)-anthranilate (PRA). The polypeptide is Anthranilate phosphoribosyltransferase (Mesorhizobium japonicum (strain LMG 29417 / CECT 9101 / MAFF 303099) (Mesorhizobium loti (strain MAFF 303099))).